Here is a 614-residue protein sequence, read N- to C-terminus: Dihydroxy-acid dehydratase (614 aa).

Asp81 is a Mg(2+) binding site. Residue Cys122 coordinates [2Fe-2S] cluster. Asp123 and Lys124 together coordinate Mg(2+). Lys124 bears the N6-carboxylysine mark. Residue Cys196 coordinates [2Fe-2S] cluster. A Mg(2+)-binding site is contributed by Glu492. Ser518 serves as the catalytic Proton acceptor.

The protein belongs to the IlvD/Edd family. As to quaternary structure, homodimer. [2Fe-2S] cluster is required as a cofactor. It depends on Mg(2+) as a cofactor.

The catalysed reaction is (2R)-2,3-dihydroxy-3-methylbutanoate = 3-methyl-2-oxobutanoate + H2O. It catalyses the reaction (2R,3R)-2,3-dihydroxy-3-methylpentanoate = (S)-3-methyl-2-oxopentanoate + H2O. The protein operates within amino-acid biosynthesis; L-isoleucine biosynthesis; L-isoleucine from 2-oxobutanoate: step 3/4. It participates in amino-acid biosynthesis; L-valine biosynthesis; L-valine from pyruvate: step 3/4. Functions in the biosynthesis of branched-chain amino acids. Catalyzes the dehydration of (2R,3R)-2,3-dihydroxy-3-methylpentanoate (2,3-dihydroxy-3-methylvalerate) into 2-oxo-3-methylpentanoate (2-oxo-3-methylvalerate) and of (2R)-2,3-dihydroxy-3-methylbutanoate (2,3-dihydroxyisovalerate) into 2-oxo-3-methylbutanoate (2-oxoisovalerate), the penultimate precursor to L-isoleucine and L-valine, respectively. In Ruegeria sp. (strain TM1040) (Silicibacter sp.), this protein is Dihydroxy-acid dehydratase.